The primary structure comprises 333 residues: L-lactate dehydrogenase B chain (333 aa).

Residues 29–57 and arginine 99 contribute to the NAD(+) site; that span reads GQVG…LEDK. Arginine 106, asparagine 138, and arginine 169 together coordinate substrate. Position 138 (asparagine 138) interacts with NAD(+). Catalysis depends on histidine 193, which acts as the Proton acceptor. Position 248 (threonine 248) interacts with substrate.

The protein belongs to the LDH/MDH superfamily. LDH family. As to quaternary structure, homotetramer.

The protein resides in the cytoplasm. It catalyses the reaction (S)-lactate + NAD(+) = pyruvate + NADH + H(+). The protein operates within fermentation; pyruvate fermentation to lactate; (S)-lactate from pyruvate: step 1/1. In terms of biological role, interconverts simultaneously and stereospecifically pyruvate and lactate with concomitant interconversion of NADH and NAD(+). The sequence is that of L-lactate dehydrogenase B chain (LDHB) from Gallus gallus (Chicken).